Consider the following 274-residue polypeptide: Diaminopimelate epimerase (274 aa).

The substrate site is built by Asn11, Gln44, and Asn64. Cys73 (proton donor) is an active-site residue. Substrate contacts are provided by residues 74–75, Asn157, Asn190, and 208–209; these read GN and ER. Catalysis depends on Cys217, which acts as the Proton acceptor. 218–219 contacts substrate; that stretch reads GS.

Belongs to the diaminopimelate epimerase family. As to quaternary structure, homodimer.

The protein resides in the cytoplasm. The catalysed reaction is (2S,6S)-2,6-diaminopimelate = meso-2,6-diaminopimelate. Its pathway is amino-acid biosynthesis; L-lysine biosynthesis via DAP pathway; DL-2,6-diaminopimelate from LL-2,6-diaminopimelate: step 1/1. Functionally, catalyzes the stereoinversion of LL-2,6-diaminopimelate (L,L-DAP) to meso-diaminopimelate (meso-DAP), a precursor of L-lysine and an essential component of the bacterial peptidoglycan. The protein is Diaminopimelate epimerase of Actinobacillus succinogenes (strain ATCC 55618 / DSM 22257 / CCUG 43843 / 130Z).